The following is a 525-amino-acid chain: WD repeat-containing protein JIP5 (525 aa).

WD repeat units lie at residues 28–69, 121–160, 211–251, 270–310, and 358–398; these read VFDE…RILN, RHKG…VMKK, HNGD…ESDA, QEDE…LVDQ, and RKHS…DDEE. Residues 396–525 form a disordered region; the sequence is DEEGKINESY…EHGIRKFEGL (130 aa). Residues 410–424 show a composition bias toward acidic residues; sequence SDNDNGFDSDADSNS. The span at 425-435 shows a compositional bias: low complexity; that stretch reads DSESVSSSDVD. Positions 463-484 are enriched in basic and acidic residues; that stretch reads SKDELLAELEKDLQSSDEDSKH. Residues 485-501 are compositionally biased toward basic residues; it reads YTKRTKSTQPKKLKKQK. The span at 513–525 shows a compositional bias: basic and acidic residues; it reads QKHEHGIRKFEGL.

The protein belongs to the WD repeat WDR55 family.

It is found in the nucleus. The protein resides in the nucleolus. This chain is WD repeat-containing protein JIP5 (JIP5), found in Kluyveromyces lactis (strain ATCC 8585 / CBS 2359 / DSM 70799 / NBRC 1267 / NRRL Y-1140 / WM37) (Yeast).